The following is a 269-amino-acid chain: Cell wall protein TIR3 (269 aa).

Residues 1–22 form the signal peptide; sequence MSFTKIAALLAVAAASTQLVSA. A disordered region spans residues 128 to 242; the sequence is SGSESATASS…TNSSSSATSK (115 aa). The N-linked (GlcNAc...) asparagine glycan is linked to Asn234. Gly245 is lipidated: GPI-anchor amidated glycine. Residues 246–269 constitute a propeptide, removed in mature form; that stretch reads AAMDMGFFSAGVGAAIAGAAAMLL.

The protein belongs to the SRP1/TIP1 family. Extensively O-glycosylated. In terms of processing, the GPI-anchor is attached to the protein in the endoplasmic reticulum and serves to target the protein to the cell surface. There, the glucosamine-inositol phospholipid moiety is cleaved off and the GPI-modified mannoprotein is covalently attached via its lipidless GPI glycan remnant to the 1,6-beta-glucan of the outer cell wall layer.

It localises to the secreted. Its subcellular location is the cell wall. It is found in the membrane. Functionally, component of the cell wall. Required for anaerobic growth. The protein is Cell wall protein TIR3 (TIR3) of Saccharomyces cerevisiae (strain ATCC 204508 / S288c) (Baker's yeast).